Consider the following 492-residue polypeptide: MSFTLAIVGRPNVGKSTLFNRLVGKKLALVDDQPGVTRDLREGEARLGDLRFTVIDSAGLEDATDNSLEGRMRRLTERAVEMADVCLFLIDARAGVTPTDEVFAEILRKKSAHVILAANKSEGSAADAGVLEAYGLGLGEPIRMSGEHGEGLNDLYSELLPVSEKFEKLAEETAPETDVVLDEDENEAFNAGEEIAATPVPTLEKPLQVAVVGRPNAGKSTLINKILGEDRLLTGPEAGITRDAISLKIDWSGTPMRIFDTAGMRKKAKVQEKLEKLSVSDGLRAVKFAEVVVVLLDAAIPFEQQDLRIADLAEREGRAVVIAVNKWDIEDEKQEKLKALKEAFERLLPQLRGAPLVTVSAKTGRGLDRLHAAIMKAHDVWNRRVPTAALNRWLAGMLEQHPPPAPQGKRIKLRYMTQAKTRPPGFVVMCSHPDKMPASYNRYLVNGLREDFDMPGTPIRLTLRGQGDKNPYKGKKKSTPSRLRKHLEGRKS.

2 consecutive EngA-type G domains span residues phenylalanine 3–glutamate 167 and leucine 207–asparagine 382. Residues glycine 9–serine 16, aspartate 56–leucine 60, asparagine 119–glutamate 122, glycine 213–serine 220, aspartate 260–methionine 264, and asparagine 325–aspartate 328 contribute to the GTP site. In terms of domain architecture, KH-like spans arginine 383–lysine 469. The interval leucine 461 to serine 492 is disordered. Basic residues predominate over residues tyrosine 472–serine 492.

The protein belongs to the TRAFAC class TrmE-Era-EngA-EngB-Septin-like GTPase superfamily. EngA (Der) GTPase family. As to quaternary structure, associates with the 50S ribosomal subunit.

In terms of biological role, GTPase that plays an essential role in the late steps of ribosome biogenesis. In Ruegeria sp. (strain TM1040) (Silicibacter sp.), this protein is GTPase Der.